A 277-amino-acid polypeptide reads, in one-letter code: Mannosyl-3-phosphoglycerate phosphatase (277 aa).

Catalysis depends on aspartate 13, which acts as the Nucleophile. Aspartate 13, aspartate 15, and aspartate 219 together coordinate Mg(2+).

Belongs to the HAD-like hydrolase superfamily. MPGP family. Requires Mg(2+) as cofactor.

It is found in the cytoplasm. The enzyme catalyses 2-O-(alpha-D-mannosyl)-3-phosphoglycerate + H2O = (2R)-2-O-(alpha-D-mannosyl)-glycerate + phosphate. The protein operates within carbohydrate biosynthesis; 2-(alpha-D-mannosyl)-D-glycerate biosynthesis; 2-(alpha-D-mannosyl)-D-glycerate from GDP-alpha-D-mannose (MPG route): step 2/2. Hydrolyzes mannosyl-3-phosphoglycerate (MPG) to form the osmolyte mannosylglycerate (MG). The polypeptide is Mannosyl-3-phosphoglycerate phosphatase (Aeropyrum pernix (strain ATCC 700893 / DSM 11879 / JCM 9820 / NBRC 100138 / K1)).